A 314-amino-acid chain; its full sequence is Peroxidase 2 (314 aa).

The N-terminal stretch at 1 to 23 (MASASSVSLMLLVAAAMASAASA) is a signal peptide. The residue at position 24 (Gln-24) is a Pyrrolidone carboxylic acid. Cystine bridges form between Cys-34/Cys-109, Cys-67/Cys-72, Cys-115/Cys-310, and Cys-194/Cys-219. His-65 acts as the Proton acceptor in catalysis. 5 residues coordinate Ca(2+): Asp-66, Val-69, Gly-71, Asp-73, and Ser-75. Asn-148 carries N-linked (GlcNAc...) asparagine glycosylation. Pro-157 contacts substrate. Asn-169 is a glycosylation site (N-linked (GlcNAc...) asparagine). His-187 contributes to the heme b binding site. Residue Thr-188 coordinates Ca(2+). An N-linked (GlcNAc...) asparagine glycan is attached at Asn-203. Ca(2+)-binding residues include Asp-234, Thr-237, and Asp-242. Residues Asn-274 and Asn-309 are each glycosylated (N-linked (GlcNAc...) asparagine).

This sequence belongs to the peroxidase family. Classical plant (class III) peroxidase subfamily. Ca(2+) is required as a cofactor. It depends on heme b as a cofactor.

Its subcellular location is the secreted. The catalysed reaction is 2 a phenolic donor + H2O2 = 2 a phenolic radical donor + 2 H2O. Removal of H(2)O(2), oxidation of toxic reductants, biosynthesis and degradation of lignin, suberization, auxin catabolism, response to environmental stresses such as wounding, pathogen attack and oxidative stress. These functions might be dependent on each isozyme/isoform in each plant tissue. This chain is Peroxidase 2 (PRX112), found in Oryza sativa subsp. japonica (Rice).